We begin with the raw amino-acid sequence, 80 residues long: Acyl carrier protein (80 aa).

A Carrier domain is found at 4-79 (EAILEKVRSI…DAVKYIEDKQ (76 aa)). Ser39 carries the post-translational modification O-(pantetheine 4'-phosphoryl)serine.

The protein belongs to the acyl carrier protein (ACP) family. In terms of processing, 4'-phosphopantetheine is transferred from CoA to a specific serine of apo-ACP by AcpS. This modification is essential for activity because fatty acids are bound in thioester linkage to the sulfhydryl of the prosthetic group.

It localises to the cytoplasm. It functions in the pathway lipid metabolism; fatty acid biosynthesis. In terms of biological role, carrier of the growing fatty acid chain in fatty acid biosynthesis. This is Acyl carrier protein from Parasynechococcus marenigrum (strain WH8102).